Here is a 185-residue protein sequence, read N- to C-terminus: Ribosome-recycling factor (185 aa).

Belongs to the RRF family.

The protein resides in the cytoplasm. Functionally, responsible for the release of ribosomes from messenger RNA at the termination of protein biosynthesis. May increase the efficiency of translation by recycling ribosomes from one round of translation to another. The sequence is that of Ribosome-recycling factor from Francisella tularensis subsp. tularensis (strain FSC 198).